Consider the following 193-residue polypeptide: Putative 3-methyladenine DNA glycosylase (193 aa).

Belongs to the DNA glycosylase MPG family.

This is Putative 3-methyladenine DNA glycosylase from Francisella tularensis subsp. holarctica (strain FTNF002-00 / FTA).